Here is a 571-residue protein sequence, read N- to C-terminus: Proline--tRNA ligase (571 aa).

The protein belongs to the class-II aminoacyl-tRNA synthetase family. ProS type 1 subfamily. Homodimer.

It is found in the cytoplasm. It carries out the reaction tRNA(Pro) + L-proline + ATP = L-prolyl-tRNA(Pro) + AMP + diphosphate. Functionally, catalyzes the attachment of proline to tRNA(Pro) in a two-step reaction: proline is first activated by ATP to form Pro-AMP and then transferred to the acceptor end of tRNA(Pro). As ProRS can inadvertently accommodate and process non-cognate amino acids such as alanine and cysteine, to avoid such errors it has two additional distinct editing activities against alanine. One activity is designated as 'pretransfer' editing and involves the tRNA(Pro)-independent hydrolysis of activated Ala-AMP. The other activity is designated 'posttransfer' editing and involves deacylation of mischarged Ala-tRNA(Pro). The misacylated Cys-tRNA(Pro) is not edited by ProRS. The protein is Proline--tRNA ligase of Photobacterium profundum (strain SS9).